Here is a 116-residue protein sequence, read N- to C-terminus: uncharacterized protein (116 aa).

The next 3 membrane-spanning stretches (helical) occupy residues 8-28 (FMIY…VSFA), 39-59 (GLLL…NPPF), and 75-95 (FLLI…YLMV).

It to M.jannaschii MJ1580.

It localises to the cell membrane. This is an uncharacterized protein from Methanothermobacter thermautotrophicus (strain ATCC 29096 / DSM 1053 / JCM 10044 / NBRC 100330 / Delta H) (Methanobacterium thermoautotrophicum).